The primary structure comprises 655 residues: WD repeat-containing protein 70 (655 aa).

Disordered stretches follow at residues Met1–Thr24 and Phe43–Arg170. Residues Gln45–Glu78 show a composition bias toward basic and acidic residues. Residues Arg99 to Ser112 are compositionally biased toward low complexity. Positions Glu148–Asp165 are enriched in acidic residues. 7 WD repeats span residues His181–Lys220, Cys228–Lys269, Gly282–Ser322, Gly331–Phe370, Ala377–Phe416, Pro422–Glu467, and Ile470–Ala509. Lys297 is covalently cross-linked (Glycyl lysine isopeptide (Lys-Gly) (interchain with G-Cter in SUMO2)). Position 453 is an N6-acetyllysine (Lys453). Basic and acidic residues predominate over residues Arg541–Glu566. Residues Arg541–Gly582 are disordered. Over residues Pro572 to Gly582 the composition is skewed to gly residues. Position 580 is a phosphothreonine (Thr580). Residues Lys591 and Lys597 each participate in a glycyl lysine isopeptide (Lys-Gly) (interchain with G-Cter in SUMO2) cross-link. Residues Ser622 and Ser639 each carry the phosphoserine modification. Residues Thr632–Ile655 are disordered. Over residues Lys645–Ile655 the composition is skewed to basic and acidic residues.

It belongs to the WD repeat GAD-1 family.

This chain is WD repeat-containing protein 70 (Wdr70), found in Rattus norvegicus (Rat).